A 545-amino-acid chain; its full sequence is Lysine--tRNA ligase (545 aa).

A 'HIGH' region motif is present at residues 41-49 (PSGVPHLGH). The 'KMSKS' region signature appears at 306-310 (ALSSS).

Belongs to the class-I aminoacyl-tRNA synthetase family.

It is found in the cytoplasm. It catalyses the reaction tRNA(Lys) + L-lysine + ATP = L-lysyl-tRNA(Lys) + AMP + diphosphate. The sequence is that of Lysine--tRNA ligase from Natronomonas pharaonis (strain ATCC 35678 / DSM 2160 / CIP 103997 / JCM 8858 / NBRC 14720 / NCIMB 2260 / Gabara) (Halobacterium pharaonis).